Reading from the N-terminus, the 386-residue chain is Cell division protein FtsZ (386 aa).

GTP is bound by residues Gly-20 to Asn-24, Gly-107 to Gly-109, Glu-138, Arg-142, and Asn-186. Residues Leu-350–Ile-377 are disordered.

It belongs to the FtsZ family. Homodimer. Polymerizes to form a dynamic ring structure in a strictly GTP-dependent manner. Interacts directly with several other division proteins.

It localises to the cytoplasm. Functionally, essential cell division protein that forms a contractile ring structure (Z ring) at the future cell division site. The regulation of the ring assembly controls the timing and the location of cell division. One of the functions of the FtsZ ring is to recruit other cell division proteins to the septum to produce a new cell wall between the dividing cells. Binds GTP and shows GTPase activity. The protein is Cell division protein FtsZ of Sodalis glossinidius.